Here is a 191-residue protein sequence, read N- to C-terminus: Succinoglycan biosynthesis protein ExoI (191 aa).

A disordered region spans residues 1 to 21 (MTRIKSAVAAGGRRAPHSARL).

The protein operates within glycan metabolism; exopolysaccharide biosynthesis. The polypeptide is Succinoglycan biosynthesis protein ExoI (exoI) (Rhizobium meliloti (strain 1021) (Ensifer meliloti)).